The following is a 293-amino-acid chain: SAGA-associated factor 29 (293 aa).

The stretch at 3–88 (LVSADSRIAE…KALDKIAEIK (86 aa)) forms a coiled coil. Residues 152 to 293 (GDYVAKPGDK…VVACKEPKKK (142 aa)) form the SGF29 C-terminal domain. Histone H3K4me3 N-terminus binding stretches follow at residues 194-196 (DID) and 240-243 (QTTC). The tract at residues 264-266 (FED) is histone H3K4me3 binding. Residue Lys-288 is modified to N6-acetyllysine.

This sequence belongs to the SGF29 family. Interacts with dimethylated and trimethylated 'Lys-4' of histone H3 (H3K4me2 and H3K4me3), with a preference for the trimethylated form (H3K4me3). Component of some SAGA-type complexes. Component of the ADA2A-containing complex (ATAC), composed of KAT14, KAT2A, TADA2L, TADA3L, ZZ3, MBIP, WDR5, YEATS2, CCDC101 and DR1. Interacts with (methylated) CGAS. Interacts with TADA3L, GCN5L2, SUPT3H and MYC. As to expression, widely expressed with highest levels in testis. Highly expressed in hepatoma and other tumor cell lines.

It is found in the nucleus. Chromatin reader component of some histone acetyltransferase (HAT) SAGA-type complexes like the TFTC-HAT, ATAC or STAGA complexes. SGF29 specifically recognizes and binds methylated 'Lys-4' of histone H3 (H3K4me), with a preference for trimethylated form (H3K4me3). In the SAGA-type complexes, SGF29 is required to recruit complexes to H3K4me. Involved in the response to endoplasmic reticulum (ER) stress by recruiting the SAGA complex to H3K4me, thereby promoting histone H3 acetylation and cell survival. Also binds non-histone proteins that are methylated on Lys residues: specifically recognizes and binds CGAS monomethylated on 'Lys-491'. May be involved in MYC-mediated oncogenic transformation. The polypeptide is SAGA-associated factor 29 (Rattus norvegicus (Rat)).